We begin with the raw amino-acid sequence, 379 residues long: Deoxyguanosinetriphosphate triphosphohydrolase-like protein (379 aa).

Positions 69 to 200 (RLTHTIEVAQ…ANLADEIAYS (132 aa)) constitute an HD domain.

It belongs to the dGTPase family. Type 2 subfamily.

The protein is Deoxyguanosinetriphosphate triphosphohydrolase-like protein of Azoarcus sp. (strain BH72).